The sequence spans 236 residues: Endonuclease V (236 aa).

2 residues coordinate Mg(2+): Asp47 and Asp115.

This sequence belongs to the endonuclease V family. It depends on Mg(2+) as a cofactor.

The protein resides in the cytoplasm. The enzyme catalyses Endonucleolytic cleavage at apurinic or apyrimidinic sites to products with a 5'-phosphate.. In terms of biological role, DNA repair enzyme involved in the repair of deaminated bases. Selectively cleaves double-stranded DNA at the second phosphodiester bond 3' to a deoxyinosine leaving behind the intact lesion on the nicked DNA. In Xanthomonas campestris pv. campestris (strain B100), this protein is Endonuclease V.